A 976-amino-acid polypeptide reads, in one-letter code: Mast/stem cell growth factor receptor kita (976 aa).

Positions 1 to 21 (MEYHCVLFTVLLQLIIQPGRS) are cleaved as a signal peptide. Topologically, residues 22 to 515 (RPTITPEGPR…NTVPHELFTP (494 aa)) are extracellular. Ig-like C2-type domains follow at residues 23–105 (PTIT…VYVK), 100–199 (IYVY…LTVR), 206–301 (PPIT…VWVN), 308–402 (INIT…FEVH), and 399–504 (FEVH…FSIS). N-linked (GlcNAc...) asparagine glycans are attached at residues Asn39 and Asn47. 4 disulfides stabilise this stretch: Cys44–Cys89, Cys131–Cys180, Cys146–Cys177, and Cys228–Cys285. N-linked (GlcNAc...) asparagine glycosylation is found at Asn282, Asn309, Asn315, Asn352, Asn449, and Asn477. Cys422 and Cys488 are oxidised to a cystine. Residues 516–536 (LLIGFVAAAVILVLILIVLTY) traverse the membrane as a helical segment. The Cytoplasmic segment spans residues 537–976 (KYMQKPKYQI…DRSSPSHPVV (440 aa)). Tyr559 is a binding site for Mg(2+). A phosphotyrosine; by autocatalysis mark is found at Tyr559 and Tyr561. Residues 580–922 (LRFGKTLGSG…ISDSTKHIYL (343 aa)) form the Protein kinase domain. ATP contacts are provided by residues 587-594 (GSGAFGKV), Lys614, and 662-668 (EYCCFGD). 2 positions are modified to phosphotyrosine; by autocatalysis: Tyr691 and Tyr707. The active-site Proton acceptor is Asp777. Arg781 lines the ATP pocket. Asn782 and Asp795 together coordinate Mg(2+). Residues Tyr808 and Tyr921 each carry the phosphotyrosine; by autocatalysis modification. The disordered stretch occupies residues 929–976 (PAAPGPREESSSHVHRLNSVGSHSTATQPLLSSNDVFLDRSSPSHPVV). Residues 947 to 976 (SVGSHSTATQPLLSSNDVFLDRSSPSHPVV) are compositionally biased toward polar residues.

It belongs to the protein kinase superfamily. Tyr protein kinase family. CSF-1/PDGF receptor subfamily. Post-translationally, ubiquitinated. Rapidly ubiquitinated after autophosphorylation induced by kitlg/scf binding, leading to internalization and degradation. Autophosphorylated on tyrosine residues. Phosphorylated tyrosine residues are important for interaction with specific binding partners. In terms of tissue distribution, expressed in cells of the neural crest-melanocyte lineage. In the embryo, also expressed in mesodermal cells that give rise to hematopoietic precursors, notochord, neural crest-derived cells of the branchial arches, pineal gland, retina and mechanoreceptive sensory cells of lateral line neuromasts. Not detected in primordial germ cells or larval gut.

It is found in the cell membrane. The catalysed reaction is L-tyrosyl-[protein] + ATP = O-phospho-L-tyrosyl-[protein] + ADP + H(+). Tyrosine-protein kinase that acts as a cell-surface receptor for the cytokine kitlg/scf and plays a role in the regulation of cell survival and proliferation, hematopoiesis, stem cell maintenance, gametogenesis, and in mast cell development, migration and function. Required for the migration of cells in the melanocyte lineage and the survival of embryonic melanocytes. Required for the differentiation of some, but not all, melanocytes. Not essential for hematopoiesis or primordial germ cell development. In Danio rerio (Zebrafish), this protein is Mast/stem cell growth factor receptor kita (kita).